Here is a 239-residue protein sequence, read N- to C-terminus: LRRN4 C-terminal-like protein (239 aa).

An N-terminal signal peptide occupies residues 1 to 19; that stretch reads MLGSLSLLWLAAMTTSLVS. The Extracellular segment spans residues 20–194; sequence QPQILTLEDY…KFIMPPKPVT (175 aa). Residues 82-179 enclose the Fibronectin type-III domain; it reads QPEPPRLGEV…EGPENWTGPS (98 aa). 2 N-linked (GlcNAc...) asparagine glycosylation sites follow: Asn-132 and Asn-174. Residues 195–215 form a helical membrane-spanning segment; the sequence is LVYAAVGVGTALALLSCAALV. Residues 216–239 are Cytoplasmic-facing; the sequence is WHFCLRERWGCPRRQGMAQASEAL.

It localises to the membrane. The sequence is that of LRRN4 C-terminal-like protein (Lrrn4cl) from Mus musculus (Mouse).